The chain runs to 357 residues: 2-oxoglutarate-dependent dioxygenase 11 (357 aa).

A Fe2OG dioxygenase domain is found at glutamine 207–proline 307. Residues histidine 231, aspartate 233, and histidine 288 each coordinate Fe cation. A 2-oxoglutarate-binding site is contributed by arginine 298.

It belongs to the iron/ascorbate-dependent oxidoreductase family. Fe(2+) is required as a cofactor. L-ascorbate serves as cofactor. In terms of tissue distribution, expressed in shoots.

Its subcellular location is the cytoplasm. The enzyme catalyses melatonin + 2-oxoglutarate + O2 = 2-hydroxymelatonin + succinate + CO2. Functionally, involved in melatonin degradation. Catalyzes the hydroxylation of melatonin to produce 2-hydroxymelatonin. The polypeptide is 2-oxoglutarate-dependent dioxygenase 11 (Oryza sativa subsp. japonica (Rice)).